Consider the following 124-residue polypeptide: Phycocyanin PC645 alpha-3 subunit (124 aa).

R71 contacts (2R,3E)-phycocyanobilin. Mesobiliverdin is bound by residues C73, Y81, and K97.

It belongs to the phycoerythrin family. As to quaternary structure, heterotetramer of 2 different alpha chains and 2 identical beta chains which form 2 alpha-beta heterodimers within the heterotetramer. Contains one phycocyanobilin chromophore and one mesobiliverdin chromophore with binding mediated by both the alpha and beta subunits.

Its subcellular location is the plastid. It is found in the chloroplast thylakoid membrane. Functionally, light-harvesting photosynthetic tetrapyrrole chromophore-protein from the phycobiliprotein complex. The protein is Phycocyanin PC645 alpha-3 subunit of Chroomonas sp. (strain CCMP270).